A 426-amino-acid polypeptide reads, in one-letter code: 3',5'-cyclic-nucleotide phosphodiesterase (426 aa).

A disordered region spans residues 210–229 (DKEDAQHHSNSNSNSNNIWG).

The protein belongs to the cyclic nucleotide phosphodiesterase class-II family.

The enzyme catalyses a nucleoside 3',5'-cyclic phosphate + H2O = a nucleoside 5'-phosphate + H(+). The protein is 3',5'-cyclic-nucleotide phosphodiesterase (PDE1) of Candida albicans (Yeast).